The sequence spans 248 residues: Proteasome subunit alpha type-5 (248 aa).

This sequence belongs to the peptidase T1A family. The 26S proteasome consists of a 20S proteasome core and two 19S regulatory subunits. The 20S proteasome core is composed of 28 subunits that are arranged in four stacked rings, resulting in a barrel-shaped structure. The two end rings are each formed by seven alpha subunits, and the two central rings are each formed by seven beta subunits. The catalytic chamber with the active sites is on the inside of the barrel.

It localises to the cytoplasm. Its subcellular location is the nucleus. The proteasome is a multicatalytic proteinase complex which is characterized by its ability to cleave peptides with Arg, Phe, Tyr, Leu, and Glu adjacent to the leaving group at neutral or slightly basic pH. The proteasome has an ATP-dependent proteolytic activity. The protein is Proteasome subunit alpha type-5 (pas-5) of Caenorhabditis elegans.